The primary structure comprises 131 residues: Profilin-1 (131 aa).

This sequence belongs to the profilin family. In terms of assembly, occurs in many kinds of cells as a complex with monomeric actin in a 1:1 ratio.

It localises to the cytoplasm. Its subcellular location is the cytoskeleton. In terms of biological role, binds to actin and affects the structure of the cytoskeleton. At high concentrations, profilin prevents the polymerization of actin, whereas it enhances it at low concentrations. By binding to PIP2, it inhibits the formation of IP3 and DG. The chain is Profilin-1 (PRO1) from Triticum aestivum (Wheat).